The sequence spans 465 residues: Siroheme synthase (465 aa).

The interval M1 to L203 is precorrin-2 dehydrogenase /sirohydrochlorin ferrochelatase. NAD(+) contacts are provided by residues E22–V23 and P43–Q44. Position 128 is a phosphoserine (S128). Residues G217–A465 form a uroporphyrinogen-III C-methyltransferase region. Residue P226 participates in S-adenosyl-L-methionine binding. D249 serves as the catalytic Proton acceptor. K271 serves as the catalytic Proton donor. S-adenosyl-L-methionine-binding positions include G302–D304, I307, T332–A333, M384, and G413.

This sequence in the N-terminal section; belongs to the precorrin-2 dehydrogenase / sirohydrochlorin ferrochelatase family. In the C-terminal section; belongs to the precorrin methyltransferase family.

It catalyses the reaction uroporphyrinogen III + 2 S-adenosyl-L-methionine = precorrin-2 + 2 S-adenosyl-L-homocysteine + H(+). The enzyme catalyses precorrin-2 + NAD(+) = sirohydrochlorin + NADH + 2 H(+). The catalysed reaction is siroheme + 2 H(+) = sirohydrochlorin + Fe(2+). It participates in cofactor biosynthesis; adenosylcobalamin biosynthesis; precorrin-2 from uroporphyrinogen III: step 1/1. It functions in the pathway cofactor biosynthesis; adenosylcobalamin biosynthesis; sirohydrochlorin from precorrin-2: step 1/1. Its pathway is porphyrin-containing compound metabolism; siroheme biosynthesis; precorrin-2 from uroporphyrinogen III: step 1/1. The protein operates within porphyrin-containing compound metabolism; siroheme biosynthesis; siroheme from sirohydrochlorin: step 1/1. It participates in porphyrin-containing compound metabolism; siroheme biosynthesis; sirohydrochlorin from precorrin-2: step 1/1. Its function is as follows. Multifunctional enzyme that catalyzes the SAM-dependent methylations of uroporphyrinogen III at position C-2 and C-7 to form precorrin-2 via precorrin-1. Then it catalyzes the NAD-dependent ring dehydrogenation of precorrin-2 to yield sirohydrochlorin. Finally, it catalyzes the ferrochelation of sirohydrochlorin to yield siroheme. The polypeptide is Siroheme synthase (Pseudomonas aeruginosa (strain UCBPP-PA14)).